A 378-amino-acid chain; its full sequence is Spermidine/putrescine import ATP-binding protein PotA (378 aa).

An ABC transporter domain is found at valine 18–isoleucine 248. Glycine 50–threonine 57 contacts ATP.

This sequence belongs to the ABC transporter superfamily. Spermidine/putrescine importer (TC 3.A.1.11.1) family. The complex is composed of two ATP-binding proteins (PotA), two transmembrane proteins (PotB and PotC) and a solute-binding protein (PotD).

It localises to the cell inner membrane. The catalysed reaction is ATP + H2O + polyamine-[polyamine-binding protein]Side 1 = ADP + phosphate + polyamineSide 2 + [polyamine-binding protein]Side 1.. In terms of biological role, part of the ABC transporter complex PotABCD involved in spermidine/putrescine import. Responsible for energy coupling to the transport system. The protein is Spermidine/putrescine import ATP-binding protein PotA of Salmonella choleraesuis (strain SC-B67).